A 387-amino-acid chain; its full sequence is Colicin-N (387 aa).

Positions 1–11 (MGSNGADNAHN) are enriched in polar residues. A disordered region spans residues 1–106 (MGSNGADNAH…ITITPDNSKP (106 aa)). The span at 14–30 (FGGGKNPGIGNTSGAGS) shows a compositional bias: gly residues. Positions 31–48 (NGSASSNRGNSNGWSWSN) are enriched in low complexity. The span at 78–87 (GNSGNRGNNG) shows a compositional bias: gly residues. Helical transmembrane passes span 325 to 345 (IIGG…LSFL) and 350 to 370 (LAVT…SSFI).

It belongs to the channel forming colicin family.

Its subcellular location is the cell membrane. Its function is as follows. This colicin is a channel-forming colicin. This class of transmembrane toxins depolarize the cytoplasmic membrane, leading to dissipation of cellular energy. In terms of biological role, colicins are polypeptide toxins produced by and active against E.coli and closely related bacteria. The sequence is that of Colicin-N (cna) from Escherichia coli.